A 709-amino-acid polypeptide reads, in one-letter code: ATP-dependent RNA helicase dbp7 (709 aa).

Residues 13–90 are disordered; the sequence is DNAQSRKPEA…KPAHELKGNK (78 aa). The segment covering 16–34 has biased composition (basic and acidic residues); sequence QSRKPEALKSSRRWTDRAR. Residues 44 to 65 are compositionally biased toward polar residues; that stretch reads NESSKSTVKRNSGTNGASTDYK. A compositionally biased stretch (basic and acidic residues) spans 66–90; sequence NSQKEKVINPVFDPRKPAHELKGNK. The Q motif motif lies at 138 to 167; sequence TNFAGVQLDTQLADHLNNKMNISAPTAIQS. The Helicase ATP-binding domain occupies 172-366; sequence ALLNTDDKDA…DSALKDALYL (195 aa). 185-192 is an ATP binding site; the sequence is AQTGSGKT. The DEAD box motif lies at 301–304; sequence DEGD. Positions 404–580 constitute a Helicase C-terminal domain; the sequence is LLRSHVRSYK…EQPNGPSGLL (177 aa). The interval 662–690 is disordered; that stretch reads GKISGANSSKPRKQGGSVDKGKSKSSKDI.

This sequence belongs to the DEAD box helicase family. DDX31/DBP7 subfamily.

The protein localises to the nucleus. Its subcellular location is the nucleolus. The catalysed reaction is ATP + H2O = ADP + phosphate + H(+). Its function is as follows. ATP-binding RNA helicase involved in the biogenesis of 60S ribosomal subunits and is required for the normal formation of 25S and 5.8S rRNAs. The sequence is that of ATP-dependent RNA helicase dbp7 (dbp7) from Schizosaccharomyces pombe (strain 972 / ATCC 24843) (Fission yeast).